Here is a 140-residue protein sequence, read N- to C-terminus: UPF0336 protein TW736 (140 aa).

Belongs to the UPF0336 family.

The sequence is that of UPF0336 protein TW736 from Tropheryma whipplei (strain TW08/27) (Whipple's bacillus).